The chain runs to 148 residues: Large ribosomal subunit protein bL9 (148 aa).

The protein belongs to the bacterial ribosomal protein bL9 family.

Its function is as follows. Binds to the 23S rRNA. The sequence is that of Large ribosomal subunit protein bL9 from Thermus thermophilus (strain ATCC BAA-163 / DSM 7039 / HB27).